Consider the following 495-residue polypeptide: Protein YhjJ (495 aa).

The N-terminal stretch at 1-24 (MQGTKIRLLAGSLLMLASAGYVQA) is a signal peptide.

The protein belongs to the peptidase M16 family.

The protein resides in the periplasm. The protein is Protein YhjJ (yhjJ) of Salmonella typhimurium (strain LT2 / SGSC1412 / ATCC 700720).